A 208-amino-acid polypeptide reads, in one-letter code: Cysteine-rich protein 2 (208 aa).

One can recognise an LIM zinc-binding 1 domain in the interval 5–57; that stretch reads CPKCDKTVYFAEKVSSLGKDWHKFCLKCERCNKTLTPGGHAEHDGKPFCHKPC. An N6-acetyllysine modification is found at Lys23. Ser104 carries the post-translational modification Phosphoserine. An LIM zinc-binding 2 domain is found at 126–178; the sequence is CPRCNKRVYFAEKVTSLGKDWHRPCLRCERCSKTLTPGGHAEHDGQPYCHKPC. An N6-acetyllysine mark is found at Lys138 and Lys144.

In terms of assembly, interacts with TGFB1I1.

This chain is Cysteine-rich protein 2 (Crip2), found in Mus musculus (Mouse).